A 1150-amino-acid polypeptide reads, in one-letter code: ATP-dependent DNA helicase Q-like 4B (1150 aa).

Disordered stretches follow at residues 124–143 (TPAIDNDSTSRTSSTKGSTF) and 154–179 (CAHNHPEHSQRSVRGTAKSIDSFSSS). A compositionally biased stretch (low complexity) spans 132–142 (TSRTSSTKGST). The stretch at 327-361 (DHVEQLHQKRLLLKKQIQQLEILIHNKERKKSQCL) forms a coiled coil. The segment covering 416 to 428 (YDISSGSEEREQS) has biased composition (basic and acidic residues). Positions 416–446 (YDISSGSEEREQSVSEVIDVTDTESSNDKKW) are disordered. The 176-residue stretch at 478 to 653 (INATMSGCDV…VQALGLVNCV (176 aa)) folds into the Helicase ATP-binding domain. 491-498 (MPTGGGKS) contributes to the ATP binding site. Residues 597-600 (DEAH) carry the DEAH box motif. A Helicase C-terminal domain is found at 678 to 823 (DIDKFIRENH…QMKMGYNCKA (146 aa)). An HRDC domain is found at 1029–1111 (SNLSGILLTA…DSTINDHYKT (83 aa)). A disordered region spans residues 1106 to 1150 (NDHYKTRPGSGKRRRDENVNPNVAEDDDPDWSASQSHKKVVKNKK). Basic residues predominate over residues 1141 to 1150 (SHKKVVKNKK).

The protein belongs to the helicase family. RecQ subfamily. Mg(2+) serves as cofactor. Mn(2+) is required as a cofactor. In terms of tissue distribution, mostly expressed in roots, seedlings, shoots, shoot apical mersitem, flowers, and siliques.

The protein resides in the nucleus. The catalysed reaction is Couples ATP hydrolysis with the unwinding of duplex DNA by translocating in the 3'-5' direction.. The enzyme catalyses ATP + H2O = ADP + phosphate + H(+). Its function is as follows. 3'-5' DNA helicase that may play a role in the repair of DNA. Required to promote but not to suppress crossovers. This chain is ATP-dependent DNA helicase Q-like 4B (RECQL4B), found in Arabidopsis thaliana (Mouse-ear cress).